The primary structure comprises 464 residues: Tryprostatin B synthase (464 aa).

The brevianamide F site is built by Met94 and Glu102. Dimethylallyl diphosphate contacts are provided by Arg113, Lys201, and Tyr203. Tyr205 contacts brevianamide F. Dimethylallyl diphosphate-binding residues include Lys294, Tyr296, Gln380, Tyr382, Tyr446, and Tyr450.

Belongs to the tryptophan dimethylallyltransferase family.

The catalysed reaction is brevianamide F + dimethylallyl diphosphate = tryprostatin B + diphosphate. It functions in the pathway mycotoxin biosynthesis. In terms of biological role, brevianamide F prenyltransferase; part of the gene cluster that mediates the biosynthesis of fumitremorgins, indole alkaloids that carry not only intriguing chemical structures, but also interesting biological and pharmacological activities. The biosynthesis of fumitremorgin-type alkaloids begins by condensation of the two amino acids L-tryptophan and L-proline to brevianamide F, catalyzed by the non-ribosomal peptide synthetase ftmA. Brevianamide F is then prenylated by the prenyltransferase ftmPT1/ftmB in the presence of dimethylallyl diphosphate, resulting in the formation of tryprostatin B. The three cytochrome P450 monooxygenases, ftmP450-1/ftmC, ftmP450-2/ftmE and ftmP450-3/FtmG, are responsible for the conversion of tryprostatin B to 6-hydroxytryprostatin B, tryprostatin A to fumitremorgin C and fumitremorgin C to 12,13-dihydroxyfumitremorgin C, respectively. The putative methyltransferase ftmMT/ftmD is expected for the conversion of 6-hydroxytryprostatin B to tryprostatin A. FtmPT2/FtmH catalyzes the prenylation of 12,13-dihydroxyfumitre-morgin C in the presence of dimethylallyl diphosphate, resulting in the formation of fumitremorgin B. Fumitremorgin B is further converted to verruculogen by ftmOx1/ftmF via the insertion of an endoperoxide bond between the two prenyl moieties. In some fungal species, verruculogen is further converted to fumitremorgin A, but the enzymes involved in this step have not been identified yet. The protein is Tryprostatin B synthase of Aspergillus fumigatus (Neosartorya fumigata).